The primary structure comprises 66 residues: Large ribosomal subunit protein uL29 (66 aa).

Belongs to the universal ribosomal protein uL29 family.

This Borreliella burgdorferi (strain ZS7) (Borrelia burgdorferi) protein is Large ribosomal subunit protein uL29.